Reading from the N-terminus, the 151-residue chain is Transcriptional regulator MraZ (151 aa).

SpoVT-AbrB domains lie at 5–51 (AHEL…PVAE) and 81–124 (AEIL…GREQ).

This sequence belongs to the MraZ family. Forms oligomers.

The protein localises to the cytoplasm. It is found in the nucleoid. The chain is Transcriptional regulator MraZ from Neisseria meningitidis serogroup C / serotype 2a (strain ATCC 700532 / DSM 15464 / FAM18).